A 252-amino-acid chain; its full sequence is 5'-nucleotidase SurE (252 aa).

Residues aspartate 8, aspartate 9, serine 40, and asparagine 92 each coordinate a divalent metal cation.

Belongs to the SurE nucleotidase family. A divalent metal cation is required as a cofactor.

The protein resides in the cytoplasm. It carries out the reaction a ribonucleoside 5'-phosphate + H2O = a ribonucleoside + phosphate. Nucleotidase that shows phosphatase activity on nucleoside 5'-monophosphates. The chain is 5'-nucleotidase SurE from Mesorhizobium japonicum (strain LMG 29417 / CECT 9101 / MAFF 303099) (Mesorhizobium loti (strain MAFF 303099)).